The primary structure comprises 867 residues: Translation initiation factor IF-2 (867 aa).

Positions 367 to 534 constitute a tr-type G domain; the sequence is TRAPVVTIMG…AILLQSEILE (168 aa). The tract at residues 376–383 is G1; that stretch reads GHVDHGKT. Position 376–383 (376–383) interacts with GTP; the sequence is GHVDHGKT. The G2 stretch occupies residues 401–405; the sequence is GITQN. Residues 422 to 425 form a G3 region; it reads DTPG. GTP is bound by residues 422–426 and 476–479; these read DTPGH and NKID. A G4 region spans residues 476-479; the sequence is NKID. A G5 region spans residues 512 to 514; sequence SAK.

This sequence belongs to the TRAFAC class translation factor GTPase superfamily. Classic translation factor GTPase family. IF-2 subfamily.

Its subcellular location is the cytoplasm. Its function is as follows. One of the essential components for the initiation of protein synthesis. Protects formylmethionyl-tRNA from spontaneous hydrolysis and promotes its binding to the 30S ribosomal subunits. Also involved in the hydrolysis of GTP during the formation of the 70S ribosomal complex. In Buchnera aphidicola subsp. Schizaphis graminum (strain Sg), this protein is Translation initiation factor IF-2.